The chain runs to 47 residues: Small, acid-soluble spore protein N (47 aa).

The segment covering 1–12 (MSNPKGSRKHFV) has biased composition (basic residues). The disordered stretch occupies residues 1–47 (MSNPKGSRKHFVPNHIGTQPRAAGGNKGKQMQDQSGQHAQVIQTKGE). Over residues 29 to 47 (KQMQDQSGQHAQVIQTKGE) the composition is skewed to polar residues.

It belongs to the SspN family.

It is found in the spore core. This Geobacillus kaustophilus (strain HTA426) protein is Small, acid-soluble spore protein N.